Here is a 464-residue protein sequence, read N- to C-terminus: Argininosuccinate lyase (464 aa).

Belongs to the lyase 1 family. Argininosuccinate lyase subfamily.

The protein localises to the cytoplasm. It catalyses the reaction 2-(N(omega)-L-arginino)succinate = fumarate + L-arginine. It participates in amino-acid biosynthesis; L-arginine biosynthesis; L-arginine from L-ornithine and carbamoyl phosphate: step 3/3. In Pseudomonas aeruginosa (strain LESB58), this protein is Argininosuccinate lyase.